A 197-amino-acid polypeptide reads, in one-letter code: MIIEIEGIKLKLHPEVYEPAEDSILLLKNLVDVKNKDVLEIGVGTGLISIACAKKGAKKIVGVDINPYAVKLAKENAKLNNVNISFFESDLFENVTGKFDVILFNPPYLPTSEDEKIDSYLNFAFDGGKDGREILDRFIYELPNYLKKGGVVQILQSSLTGEKETINKLKPLGFKVEISARLKVPFEELMVINAWRL.

Residues 42–46 (GVGTG), Asp64, and Asn105 each bind S-adenosyl-L-methionine. Position 105–108 (105–108 (NPPY)) interacts with substrate.

It belongs to the eukaryotic/archaeal PrmC-related family.

It carries out the reaction L-glutaminyl-[protein] + S-adenosyl-L-methionine = N(5)-methyl-L-glutaminyl-[protein] + S-adenosyl-L-homocysteine + H(+). Functionally, putative protein methyltransferase using S-adenosyl-L-methionine as the methyl donor. May methylate a Gln residue in target proteins. This is Putative protein N5-glutamine methyltransferase MJ0928 from Methanocaldococcus jannaschii (strain ATCC 43067 / DSM 2661 / JAL-1 / JCM 10045 / NBRC 100440) (Methanococcus jannaschii).